The chain runs to 761 residues: Cyclin-F (761 aa).

The Nuclear localization signal 1 signature appears at 19–27 (RRRIKRRPR). Residues 28–75 (VLTLLSLPEDVLLYVLECLPAVDILSMREVHPHLRSLVDSHSSVWARA) form the F-box domain. In terms of domain architecture, Cyclin N-terminal spans 300–411 (NKSSIFTTQK…EIISALEGKI (112 aa)). 2 consecutive short sequence motifs (d box) follow at residues 316–319 (RYIL) and 355–358 (RAKL). Disordered stretches follow at residues 575-594 (NKTKRRREESIQEDRGSFVT) and 677-761 (AENG…SDEL). The segment covering 580-590 (RREESIQEDRG) has biased composition (basic and acidic residues). A PEST region spans residues 589-745 (RGSFVTTPTA…LLKASRRQVK (157 aa)). Positions 691 to 718 (SSGYSSVSSGGSPTSSSSPGLPFTPTPG) are enriched in low complexity. The span at 739–749 (ASRRQVKRKNQ) shows a compositional bias: basic residues.

It belongs to the cyclin family. Cyclin AB subfamily. As to quaternary structure, component of the SCF(CCNF) complex.

The protein localises to the nucleus. It is found in the cytoplasm. It localises to the perinuclear region. Its subcellular location is the cytoskeleton. The protein resides in the microtubule organizing center. The protein localises to the centrosome. It is found in the centriole. Its function is as follows. Substrate recognition component of the SCF(CCNF) E3 ubiquitin-protein ligase complex which mediates the ubiquitination and subsequent proteasomal degradation of target proteins. The SCF(CCNF) E3 ubiquitin-protein ligase complex is an integral component of the ubiquitin proteasome system (UPS) and links proteasome degradation to the cell cycle. Mediates the substrate recognition and the proteasomal degradation of various target proteins during G2 phase involved in the regulation of cell cycle progression and in the maintenance of genome stability. In Xenopus laevis (African clawed frog), this protein is Cyclin-F (ccnf).